Consider the following 226-residue polypeptide: Putative methyltransferase RP459 (226 aa).

It belongs to the methyltransferase superfamily.

This Rickettsia prowazekii (strain Madrid E) protein is Putative methyltransferase RP459.